A 138-amino-acid polypeptide reads, in one-letter code: Small ribosomal subunit protein uS9 (138 aa).

A compositionally biased stretch (basic and acidic residues) spans 100-118; sequence PENRPPLKTEGYLTRDPRA. A disordered region spans residues 100-138; sequence PENRPPLKTEGYLTRDPRAKERKKYGLHKARKAPQYSKR. Positions 119–138 are enriched in basic residues; it reads KERKKYGLHKARKAPQYSKR.

This sequence belongs to the universal ribosomal protein uS9 family.

This is Small ribosomal subunit protein uS9 from Trichormus variabilis (strain ATCC 29413 / PCC 7937) (Anabaena variabilis).